A 390-amino-acid chain; its full sequence is Putative glutamate--cysteine ligase 2 (390 aa).

Belongs to the glutamate--cysteine ligase type 2 family. YbdK subfamily.

The enzyme catalyses L-cysteine + L-glutamate + ATP = gamma-L-glutamyl-L-cysteine + ADP + phosphate + H(+). Functionally, ATP-dependent carboxylate-amine ligase which exhibits weak glutamate--cysteine ligase activity. The chain is Putative glutamate--cysteine ligase 2 from Chloroflexus aurantiacus (strain ATCC 29366 / DSM 635 / J-10-fl).